A 479-amino-acid polypeptide reads, in one-letter code: Rifampicin monooxygenase (479 aa).

10 residues coordinate FAD: T12, D31, K32, R41, Q98, V122, T156, D278, L291, and N292.

Belongs to the rifampicin monooxygenase family. The cofactor is FAD.

It catalyses the reaction rifampicin + NADPH + O2 = rifampicin para-naphthoquinone carboxamide + NADP(+) + H2O + H(+). The catalysed reaction is rifampicin + NADH + O2 = rifampicin para-naphthoquinone carboxamide + NAD(+) + H2O + H(+). Functionally, monooxygenase that can modify rifampicin, thereby inactivating its antibiotic activity. The protein is Rifampicin monooxygenase of Rhodococcus hoagii (Corynebacterium equii).